The chain runs to 233 residues: 6-carboxyhexanoate--CoA ligase (233 aa).

This sequence belongs to the BioW family. As to quaternary structure, homodimer. Mg(2+) serves as cofactor.

It catalyses the reaction heptanedioate + ATP + CoA = 6-carboxyhexanoyl-CoA + AMP + diphosphate. It participates in metabolic intermediate metabolism; pimeloyl-CoA biosynthesis; pimeloyl-CoA from pimelate: step 1/1. Functionally, catalyzes the transformation of pimelate into pimeloyl-CoA with concomitant hydrolysis of ATP to AMP. The sequence is that of 6-carboxyhexanoate--CoA ligase from Methanocaldococcus sp. (strain FS406-22).